The following is a 220-amino-acid chain: uncharacterized protein (220 aa).

The next 4 helical transmembrane spans lie at L9–Q29, Y54–V74, V105–W125, and V177–M197.

The protein resides in the cell membrane. This is an uncharacterized protein from Sinorhizobium fredii (strain NBRC 101917 / NGR234).